The sequence spans 67 residues: Conotoxin Pu5.1 (67 aa).

An N-terminal signal peptide occupies residues 1–22; that stretch reads MRCVPVFVILLLLIASTPSVDA. A propeptide spanning residues 23-51 is cleaved from the precursor; it reads RPNPKDDVPLASFHEDANGILQMLWKKGR. A Tryptophan amide modification is found at Trp-63.

It belongs to the conotoxin T superfamily. Post-translationally, contains 2 disulfide bonds that can be either 'C1-C3, C2-C4' or 'C1-C4, C2-C3', since these disulfide connectivities have been observed for conotoxins with cysteine framework V (for examples, see AC P0DQQ7 and AC P81755). Expressed by the venom duct.

The protein resides in the secreted. The polypeptide is Conotoxin Pu5.1 (Conus pulicarius (Flea-bitten cone)).